Consider the following 23-residue polypeptide: Basic phospholipase A2 mangshantoxin (23 aa).

Belongs to the phospholipase A2 family. Group II subfamily. Ca(2+) serves as cofactor. In terms of processing, contains 7 disulfide bonds. As to expression, expressed by the venom gland.

The protein resides in the secreted. It catalyses the reaction a 1,2-diacyl-sn-glycero-3-phosphocholine + H2O = a 1-acyl-sn-glycero-3-phosphocholine + a fatty acid + H(+). Its function is as follows. Snake venom phospholipase A2 (PLA2) that displays presynaptic neurotoxicity. PLA2 catalyzes the calcium-dependent hydrolysis of the 2-acyl groups in 3-sn-phosphoglycerides. The chain is Basic phospholipase A2 mangshantoxin from Protobothrops mangshanensis (Mangshan pitviper).